Consider the following 328-residue polypeptide: Ribosomal RNA small subunit methyltransferase H (328 aa).

S-adenosyl-L-methionine is bound by residues 64–66, D83, F112, D129, and Q136; that span reads GGH.

Belongs to the methyltransferase superfamily. RsmH family.

It localises to the cytoplasm. The enzyme catalyses cytidine(1402) in 16S rRNA + S-adenosyl-L-methionine = N(4)-methylcytidine(1402) in 16S rRNA + S-adenosyl-L-homocysteine + H(+). Its function is as follows. Specifically methylates the N4 position of cytidine in position 1402 (C1402) of 16S rRNA. This chain is Ribosomal RNA small subunit methyltransferase H, found in Bdellovibrio bacteriovorus (strain ATCC 15356 / DSM 50701 / NCIMB 9529 / HD100).